An 864-amino-acid polypeptide reads, in one-letter code: Protein PAT1 homolog 1 (864 aa).

A compositionally biased stretch (polar residues) spans 427–439; the sequence is PPNSRPNGPQFSG. 3 disordered regions span residues 427-460, 518-539, and 551-602; these read PPNS…SGMP, WTAH…SRKD, and EMQK…STHN. Residues 551 to 580 show a composition bias toward basic and acidic residues; it reads EMQKERLRDREKERQRERQERIDRGEERKP.

It belongs to the PAT1 family.

It localises to the cytoplasm. Its subcellular location is the P-body. In terms of biological role, RNA-binding protein involved in deadenylation-dependent decapping of mRNAs, leading to the degradation of mRNAs. Acts as a scaffold protein that connects deadenylation and decapping machinery. Required for the recruitment of P-body components such as cgh-1 in somatic blastomeres. May play a role in recruiting the decapping enzyme dcap-1 to cytoplasmic puncta in the cell body of the posterior touch receptor neuron, PLM. The sequence is that of Protein PAT1 homolog 1 (patr-1) from Caenorhabditis briggsae.